Consider the following 364-residue polypeptide: Alanine racemase (364 aa).

Lysine 35 functions as the Proton acceptor; specific for D-alanine in the catalytic mechanism. An N6-(pyridoxal phosphate)lysine modification is found at lysine 35. Arginine 131 is a binding site for substrate. Tyrosine 256 functions as the Proton acceptor; specific for L-alanine in the catalytic mechanism. Methionine 304 provides a ligand contact to substrate.

It belongs to the alanine racemase family. Requires pyridoxal 5'-phosphate as cofactor.

It catalyses the reaction L-alanine = D-alanine. It participates in amino-acid biosynthesis; D-alanine biosynthesis; D-alanine from L-alanine: step 1/1. Functionally, catalyzes the interconversion of L-alanine and D-alanine. May also act on other amino acids. The protein is Alanine racemase (alr) of Chromohalobacter salexigens (strain ATCC BAA-138 / DSM 3043 / CIP 106854 / NCIMB 13768 / 1H11).